Consider the following 305-residue polypeptide: Ribosomal RNA small subunit methyltransferase H (305 aa).

S-adenosyl-L-methionine-binding positions include 47-49 (GGH), D66, F93, D108, and Q115. Residues 280 to 305 (ASAEEQERNPRSRSAKLRIARKRSES) form a disordered region. Over residues 290–305 (RSRSAKLRIARKRSES) the composition is skewed to basic residues.

It belongs to the methyltransferase superfamily. RsmH family.

It localises to the cytoplasm. The catalysed reaction is cytidine(1402) in 16S rRNA + S-adenosyl-L-methionine = N(4)-methylcytidine(1402) in 16S rRNA + S-adenosyl-L-homocysteine + H(+). Functionally, specifically methylates the N4 position of cytidine in position 1402 (C1402) of 16S rRNA. This is Ribosomal RNA small subunit methyltransferase H from Synechococcus sp. (strain WH7803).